Here is a 138-residue protein sequence, read N- to C-terminus: MKMSAEQISEVLKEGELEKRSDNLLQFWKRKTCVLTTDSLNIYADTQKRTKSKELKLQSIKKVDCVERTGKFVYFTIVTTDNKEIDFRCSGDDNCWNAVITMALIDFQNRKAIQDFKTRQDDESGSPGQHESRMARAP.

Residues 11 to 105 form the PH domain; that stretch reads VLKEGELEKR…WNAVITMALI (95 aa). The interval 117–138 is disordered; that stretch reads KTRQDDESGSPGQHESRMARAP.

This sequence belongs to the PHLDA2 family.

The protein resides in the cytoplasm. The protein localises to the membrane. Functionally, plays a role in regulating placenta growth. May act via its PH domain that competes with other PH domain-containing proteins, thereby preventing their binding to membrane lipids. This Salmo salar (Atlantic salmon) protein is Pleckstrin homology-like domain family A member 2 (phlda2).